Consider the following 628-residue polypeptide: Alpha-L-arabinofuranosidase A (628 aa).

A signal peptide spans Met1 to Gly25. 8 N-linked (GlcNAc...) asparagine glycosylation sites follow: Asn36, Asn51, Asn74, Asn152, Asn171, Asn260, Asn359, and Asn493.

It belongs to the glycosyl hydrolase 51 family.

It localises to the secreted. The enzyme catalyses Hydrolysis of terminal non-reducing alpha-L-arabinofuranoside residues in alpha-L-arabinosides.. Its pathway is glycan metabolism; L-arabinan degradation. Functionally, alpha-L-arabinofuranosidase involved in the degradation of arabinoxylan, a major component of plant hemicellulose. Acts only on small linear 1,5-alpha-linked L-arabinofuranosyl oligosaccharides. The protein is Alpha-L-arabinofuranosidase A (abfA) of Aspergillus kawachii (strain NBRC 4308) (White koji mold).